Here is a 436-residue protein sequence, read N- to C-terminus: Glutamyl-tRNA reductase (436 aa).

Residues Thr52–Arg55, Ser105, Glu110–Gln112, and Gln116 contribute to the substrate site. Cys53 (nucleophile) is an active-site residue. Gly184–Gly189 contributes to the NADP(+) binding site.

The protein belongs to the glutamyl-tRNA reductase family. As to quaternary structure, homodimer.

It carries out the reaction (S)-4-amino-5-oxopentanoate + tRNA(Glu) + NADP(+) = L-glutamyl-tRNA(Glu) + NADPH + H(+). The protein operates within porphyrin-containing compound metabolism; protoporphyrin-IX biosynthesis; 5-aminolevulinate from L-glutamyl-tRNA(Glu): step 1/2. In terms of biological role, catalyzes the NADPH-dependent reduction of glutamyl-tRNA(Glu) to glutamate 1-semialdehyde (GSA). In Halobacterium salinarum (strain ATCC 29341 / DSM 671 / R1), this protein is Glutamyl-tRNA reductase.